Here is a 234-residue protein sequence, read N- to C-terminus: Large ribosomal subunit protein uL1 (234 aa).

Belongs to the universal ribosomal protein uL1 family. As to quaternary structure, part of the 50S ribosomal subunit.

In terms of biological role, binds directly to 23S rRNA. The L1 stalk is quite mobile in the ribosome, and is involved in E site tRNA release. Protein L1 is also a translational repressor protein, it controls the translation of the L11 operon by binding to its mRNA. This chain is Large ribosomal subunit protein uL1, found in Sulfurovum sp. (strain NBC37-1).